Here is a 248-residue protein sequence, read N- to C-terminus: Adenosylcobinamide-GDP ribazoletransferase (248 aa).

A run of 7 helical transmembrane segments spans residues 24-44 (EINL…IGAW), 70-90 (IIIT…GLFS), 106-126 (VGAN…SLFL), 134-154 (IGWL…LLFA), 157-177 (TYAG…WWPV), 188-210 (LGLF…TIIY), and 228-248 (AGGQ…WGLI).

The protein belongs to the CobS family. Mg(2+) serves as cofactor.

Its subcellular location is the cell membrane. The enzyme catalyses alpha-ribazole + adenosylcob(III)inamide-GDP = adenosylcob(III)alamin + GMP + H(+). The catalysed reaction is alpha-ribazole 5'-phosphate + adenosylcob(III)inamide-GDP = adenosylcob(III)alamin 5'-phosphate + GMP + H(+). It functions in the pathway cofactor biosynthesis; adenosylcobalamin biosynthesis; adenosylcobalamin from cob(II)yrinate a,c-diamide: step 7/7. Its function is as follows. Joins adenosylcobinamide-GDP and alpha-ribazole to generate adenosylcobalamin (Ado-cobalamin). Also synthesizes adenosylcobalamin 5'-phosphate from adenosylcobinamide-GDP and alpha-ribazole 5'-phosphate. The protein is Adenosylcobinamide-GDP ribazoletransferase of Listeria monocytogenes serotype 4b (strain CLIP80459).